Consider the following 337-residue polypeptide: MANRGGRHARNEESDNTINYVQCDGLAVMKMVKHCHEESSNMDLAQGALLGLVVDKCLEITNCFPFPKSGDETMDEEMYQLTVMRRLRRVNVDHLHVGWYQSSDVGNSLSLALLESQYHYQTSIEESVVVVYDTQKSSRGFLCLKAYRLTPQAIQMYKDGDFTPEAFRTLKVGYESLFAEIPIVIKNSPLTNIMMSELNELLPEDKGHNFLDLGTASVLENHMRSLIERVDELYQEAVRYNKYQQVVFKQDTEKHRALAKLAAENAVRTSKGEPTVPEEEVIKQFRPMPVPARLTATITSGQINTHAQHIAQFCSQSLAKLFITESLQNAKEAKETK.

Residues 21–153 form the MPN domain; the sequence is VQCDGLAVMK…LKAYRLTPQA (133 aa).

This sequence belongs to the eIF-3 subunit H family. In terms of assembly, component of the eukaryotic translation initiation factor 3 (eIF-3) complex. The eIF-3 complex interacts with pix. Interacts with mxt.

The protein resides in the cytoplasm. Functionally, component of the eukaryotic translation initiation factor 3 (eIF-3) complex, which is involved in protein synthesis of a specialized repertoire of mRNAs and, together with other initiation factors, stimulates binding of mRNA and methionyl-tRNAi to the 40S ribosome. The eIF-3 complex specifically targets and initiates translation of a subset of mRNAs involved in cell proliferation. This chain is Eukaryotic translation initiation factor 3 subunit H, found in Drosophila ananassae (Fruit fly).